Here is a 45-residue protein sequence, read N- to C-terminus: Large ribosomal subunit protein bL34 (45 aa).

A disordered region spans residues 1–45 (MTKRTFGGTSRKRKRVSGFRVRMRTHTGRSVIRSRRKKGRSRIAV). A compositionally biased stretch (basic residues) spans 10–45 (SRKRKRVSGFRVRMRTHTGRSVIRSRRKKGRSRIAV).

Belongs to the bacterial ribosomal protein bL34 family.

The protein is Large ribosomal subunit protein bL34 of Prochlorococcus marinus (strain SARG / CCMP1375 / SS120).